The primary structure comprises 279 residues: Urease accessory protein UreD (279 aa).

This sequence belongs to the UreD family. In terms of assembly, ureD, UreF and UreG form a complex that acts as a GTP-hydrolysis-dependent molecular chaperone, activating the urease apoprotein by helping to assemble the nickel containing metallocenter of UreC. The UreE protein probably delivers the nickel.

It localises to the cytoplasm. Its function is as follows. Required for maturation of urease via the functional incorporation of the urease nickel metallocenter. This chain is Urease accessory protein UreD, found in Nostoc sp. (strain PCC 7120 / SAG 25.82 / UTEX 2576).